A 188-amino-acid chain; its full sequence is Protein SSX5 (188 aa).

The KRAB-related domain occupies 20-83 (KMQKAFDDIA…KRVADFQGND (64 aa)). The segment at 78–188 (DFQGNDFDND…EISDPQEDDE (111 aa)) is disordered. Basic and acidic residues predominate over residues 112-122 (TPEKPAEEGND). Residues 144–155 (KLNTSEKVNKTS) are compositionally biased toward polar residues. The span at 156-170 (GPKRGKHAWTHRVRE) shows a compositional bias: basic residues. The span at 179–188 (EISDPQEDDE) shows a compositional bias: acidic residues.

The protein belongs to the SSX family.

Could act as a modulator of transcription. In Homo sapiens (Human), this protein is Protein SSX5 (SSX5).